The sequence spans 185 residues: Ribosome-recycling factor (185 aa).

It belongs to the RRF family.

The protein localises to the cytoplasm. Responsible for the release of ribosomes from messenger RNA at the termination of protein biosynthesis. May increase the efficiency of translation by recycling ribosomes from one round of translation to another. The sequence is that of Ribosome-recycling factor from Streptococcus pneumoniae (strain P1031).